The primary structure comprises 463 residues: Increased DNA methylation 3 (463 aa).

The span at 169–182 (NLDESRETEQDCSR) shows a compositional bias: basic and acidic residues. Disordered regions lie at residues 169 to 199 (NLDE…DYNS) and 300 to 347 (RRFK…TTGT). The segment covering 184–199 (GDATANGVVTNEDYNS) has biased composition (polar residues). Over residues 300 to 310 (RRFKNSSKKAT) the composition is skewed to basic residues.

In terms of assembly, interacts with MBD7 (via C-terminus), IDM1 and IDM2. Part of a complex made of MBD7, IDM1, IDM2 and IDM3.

It is found in the nucleus. Its function is as follows. Acts as an anti-silencing factor that prevents DNA hypermethylation and gene repression. The sequence is that of Increased DNA methylation 3 from Arabidopsis thaliana (Mouse-ear cress).